A 122-amino-acid chain; its full sequence is Large ribosomal subunit protein uL14 (122 aa).

It belongs to the universal ribosomal protein uL14 family. As to quaternary structure, part of the 50S ribosomal subunit. Forms a cluster with proteins L3 and L19. In the 70S ribosome, L14 and L19 interact and together make contacts with the 16S rRNA in bridges B5 and B8.

Binds to 23S rRNA. Forms part of two intersubunit bridges in the 70S ribosome. The polypeptide is Large ribosomal subunit protein uL14 (Francisella tularensis subsp. holarctica (strain LVS)).